A 291-amino-acid chain; its full sequence is Tyrosine recombinase XerA (291 aa).

Positions 9 to 102 (PESGDLYNAF…AVRRFLKWIN (94 aa)) constitute a Core-binding (CB) domain. Residues 115–279 (KEVKALDEIQ…VLDDLRNEYL (165 aa)) enclose the Tyr recombinase domain. Residues Arg150, Lys175, His231, Arg234, and His257 contribute to the active site. Tyr266 acts as the O-(3'-phospho-DNA)-tyrosine intermediate in catalysis.

Belongs to the 'phage' integrase family. XerA subfamily.

The protein localises to the cytoplasm. Its function is as follows. Site-specific tyrosine recombinase, which acts by catalyzing the cutting and rejoining of the recombining DNA molecules. Probably involved in the resolution of chromosome dimers. Binds to the dif site. This is Tyrosine recombinase XerA from Saccharolobus solfataricus (strain ATCC 35092 / DSM 1617 / JCM 11322 / P2) (Sulfolobus solfataricus).